Reading from the N-terminus, the 404-residue chain is Pectate lyase E (404 aa).

The N-terminal stretch at 1 to 41 (MNNSRMSSVSTQKTTGRSALGTKSALAAIIATTMMVSVASA) is a signal peptide. Ca(2+) is bound by residues D182 and D225. Residue R278 is part of the active site.

It belongs to the polysaccharide lyase 1 family. PLBC subfamily. It depends on Ca(2+) as a cofactor.

The protein localises to the secreted. It carries out the reaction Eliminative cleavage of (1-&gt;4)-alpha-D-galacturonan to give oligosaccharides with 4-deoxy-alpha-D-galact-4-enuronosyl groups at their non-reducing ends.. The protein operates within glycan metabolism; pectin degradation; 2-dehydro-3-deoxy-D-gluconate from pectin: step 2/5. Its function is as follows. Involved in maceration and soft-rotting of plant tissue. Pectate lyases have been implicated as pathogenicity factors which induce maceration or rotting of plant tissue. PelE is sufficient to induce these effects under laboratory conditions. The polypeptide is Pectate lyase E (pelE) (Dickeya dadantii (strain 3937) (Erwinia chrysanthemi (strain 3937))).